The sequence spans 290 residues: Nitrogenase iron protein 2 (290 aa).

10-17 (GKGGIGKS) provides a ligand contact to ATP. Cysteine 98 contacts [4Fe-4S] cluster. Arginine 101 is modified (ADP-ribosylarginine; by dinitrogenase reductase ADP-ribosyltransferase). Cysteine 133 is a binding site for [4Fe-4S] cluster.

It belongs to the NifH/BchL/ChlL family. As to quaternary structure, homodimer. [4Fe-4S] cluster serves as cofactor. The reversible ADP-ribosylation of Arg-101 inactivates the nitrogenase reductase and regulates nitrogenase activity.

It carries out the reaction N2 + 8 reduced [2Fe-2S]-[ferredoxin] + 16 ATP + 16 H2O = H2 + 8 oxidized [2Fe-2S]-[ferredoxin] + 2 NH4(+) + 16 ADP + 16 phosphate + 6 H(+). In terms of biological role, the key enzymatic reactions in nitrogen fixation are catalyzed by the nitrogenase complex, which has 2 components: the iron protein (component 2) and a component 1 which is either a molybdenum-iron protein, a vanadium-iron, or an iron-iron protein. The protein is Nitrogenase iron protein 2 (vnfH) of Azotobacter chroococcum mcd 1.